The primary structure comprises 305 residues: GMP synthase [glutamine-hydrolyzing] subunit B (305 aa).

Positions 2 to 184 constitute a GMPS ATP-PPase domain; it reads VNIEKFIDQA…LGLPAEIQHR (183 aa). ATP is bound at residue 29 to 35; it reads SGGVDSS.

As to quaternary structure, heterodimer composed of a glutamine amidotransferase subunit (A) and a GMP-binding subunit (B).

It carries out the reaction XMP + L-glutamine + ATP + H2O = GMP + L-glutamate + AMP + diphosphate + 2 H(+). It participates in purine metabolism; GMP biosynthesis; GMP from XMP (L-Gln route): step 1/1. Catalyzes the synthesis of GMP from XMP. The sequence is that of GMP synthase [glutamine-hydrolyzing] subunit B from Methanoculleus marisnigri (strain ATCC 35101 / DSM 1498 / JR1).